The following is a 183-amino-acid chain: Dual-action ribosomal maturation protein DarP (183 aa).

Belongs to the DarP family.

The protein localises to the cytoplasm. Functionally, member of a network of 50S ribosomal subunit biogenesis factors which assembles along the 30S-50S interface, preventing incorrect 23S rRNA structures from forming. Promotes peptidyl transferase center (PTC) maturation. This Salmonella paratyphi A (strain ATCC 9150 / SARB42) protein is Dual-action ribosomal maturation protein DarP.